A 501-amino-acid chain; its full sequence is Aldehyde dehydrogenase, cytosolic 1 (501 aa).

Position 246–251 (246–251 (GSTEVG)) interacts with NAD(+). Glutamate 269 acts as the Proton acceptor in catalysis. The active-site Nucleophile is the cysteine 303.

The protein belongs to the aldehyde dehydrogenase family. In terms of assembly, homotetramer. As to expression, eye specific, with very high expression in the lens.

It is found in the cytoplasm. It carries out the reaction an aldehyde + NAD(+) + H2O = a carboxylate + NADH + 2 H(+). The protein operates within alcohol metabolism; ethanol degradation; acetate from ethanol: step 2/2. Major component of the eye of elephant shrews, which in contrast to other mammals, possesses both a lens- and a non-lens class-1 aldehyde dehydrogenase 1. This eye-specific form is a structural protein of the lens and, in other part of the eye, serves as the major form of ALDH1. Can convert/oxidize retinaldehyde to retinoic acid. The chain is Aldehyde dehydrogenase, cytosolic 1 (ALDH1) from Macroscelides proboscideus (Short-eared elephant shrew).